A 73-amino-acid polypeptide reads, in one-letter code: V-type proton ATPase subunit e (73 aa).

Over 1-3 (MSS) the chain is Lumenal. A helical transmembrane segment spans residues 4–24 (FYTVVGVFIVVSAMSVLFWIM). Topologically, residues 25–35 (APKNNQAVWRS) are cytoplasmic. The chain crosses the membrane as a helical span at residues 36–56 (TVILTLAMMFLMWAITFLCQL). Topologically, residues 57-73 (HPLVAPRRSDLRPEFAE) are lumenal.

Belongs to the V-ATPase e1/e2 subunit family. In terms of assembly, V-ATPase is a heteromultimeric enzyme composed of a peripheral catalytic V1 complex (components A to H) attached to an integral membrane V0 proton pore complex (components: a, c, c', c'', d, e, f and VOA1).

Its subcellular location is the vacuole membrane. In terms of biological role, subunit of the V0 complex of vacuolar(H+)-ATPase (V-ATPase), a multisubunit enzyme composed of a peripheral complex (V1) that hydrolyzes ATP and a membrane integral complex (V0) that translocates protons. V-ATPase is responsible for acidifying and maintaining the pH of intracellular compartments. This is V-type proton ATPase subunit e (VMA9) from Saccharomyces cerevisiae (strain ATCC 204508 / S288c) (Baker's yeast).